The primary structure comprises 297 residues: MFTGSLVALVTPMHIDGSIDWQALEALINWHIASQTQAIVVAGTTGEAATLTLDEHKAIMRFCVDIANDRIPIIAGAGANATARAIELTLAAYHCGCAASLQVTPYYNRPPQRGLYAHFAKIAAAAPLPMILYNVPTRTACDIALETVTALAKITHIIGIKEATPHARLAQIRQLFPKNQSFKIYGGEDALCAQAACEGLIDGVISVTANVAPEAMQNMMHCALNGDLKQAQAINQRLAALHESLFCETNPIAVKWALQRMGKIAAGIRLPLMPLDERWHESLTAALVAAGITIQTH.

Pyruvate is bound at residue Thr45. Catalysis depends on Tyr133, which acts as the Proton donor/acceptor. The active-site Schiff-base intermediate with substrate is Lys161. Ile205 contributes to the pyruvate binding site.

It belongs to the DapA family. As to quaternary structure, homotetramer; dimer of dimers.

The protein resides in the cytoplasm. It carries out the reaction L-aspartate 4-semialdehyde + pyruvate = (2S,4S)-4-hydroxy-2,3,4,5-tetrahydrodipicolinate + H2O + H(+). The protein operates within amino-acid biosynthesis; L-lysine biosynthesis via DAP pathway; (S)-tetrahydrodipicolinate from L-aspartate: step 3/4. In terms of biological role, catalyzes the condensation of (S)-aspartate-beta-semialdehyde [(S)-ASA] and pyruvate to 4-hydroxy-tetrahydrodipicolinate (HTPA). The sequence is that of 4-hydroxy-tetrahydrodipicolinate synthase from Dichelobacter nodosus (strain VCS1703A).